Consider the following 158-residue polypeptide: NAD(P)H-quinone oxidoreductase subunit J, chloroplastic (158 aa).

It belongs to the complex I 30 kDa subunit family. As to quaternary structure, NDH is composed of at least 16 different subunits, 5 of which are encoded in the nucleus.

The protein resides in the plastid. It localises to the chloroplast thylakoid membrane. The catalysed reaction is a plastoquinone + NADH + (n+1) H(+)(in) = a plastoquinol + NAD(+) + n H(+)(out). The enzyme catalyses a plastoquinone + NADPH + (n+1) H(+)(in) = a plastoquinol + NADP(+) + n H(+)(out). Functionally, NDH shuttles electrons from NAD(P)H:plastoquinone, via FMN and iron-sulfur (Fe-S) centers, to quinones in the photosynthetic chain and possibly in a chloroplast respiratory chain. The immediate electron acceptor for the enzyme in this species is believed to be plastoquinone. Couples the redox reaction to proton translocation, and thus conserves the redox energy in a proton gradient. In Citrus sinensis (Sweet orange), this protein is NAD(P)H-quinone oxidoreductase subunit J, chloroplastic.